Here is a 651-residue protein sequence, read N- to C-terminus: Probable replication restart protein PriA (651 aa).

Residues Cys371, Cys374, Cys380, Cys383, Cys399, Cys402, Cys411, and Cys414 each coordinate Zn(2+).

The protein belongs to the helicase family. PriA subfamily. As to quaternary structure, component of the replication restart primosome. Requires Zn(2+) as cofactor.

In terms of biological role, initiates the restart of stalled replication forks, which reloads the replicative helicase on sites other than the origin of replication. Recognizes and binds to abandoned replication forks and remodels them to uncover a helicase loading site. Promotes assembly of the primosome at these replication forks. This chain is Probable replication restart protein PriA, found in Mycobacterium leprae (strain TN).